Consider the following 176-residue polypeptide: Flavodoxin 1 (176 aa).

Residues 4-165 (HGIFFGSDTG…RVEKWVKQIS (162 aa)) enclose the Flavodoxin-like domain.

This sequence belongs to the flavodoxin family. FMN is required as a cofactor.

Low-potential electron donor to a number of redox enzymes. The chain is Flavodoxin 1 (fldA) from Shigella flexneri.